A 308-amino-acid polypeptide reads, in one-letter code: Isoaspartyl peptidase/L-asparaginase (308 aa).

An N-acetylmethionine modification is found at Met1. Thr168 acts as the Nucleophile in catalysis. Substrate-binding positions include 196–199 (RVGD) and 219–222 (TGHG).

The protein belongs to the Ntn-hydrolase family. In terms of assembly, heterodimer of an alpha and beta chain produced by autocleavage. This heterodimer may then dimerize in turn, giving rise to a heterotetramer. Cleaved into an alpha and beta chain by autocatalysis; this activates the enzyme. The N-terminal residue of the beta subunit is responsible for the nucleophile hydrolase activity.

The protein resides in the cytoplasm. It carries out the reaction L-asparagine + H2O = L-aspartate + NH4(+). The catalysed reaction is Cleavage of a beta-linked Asp residue from the N-terminus of a polypeptide.. Has both L-asparaginase and beta-aspartyl peptidase activity. May be involved in the production of L-aspartate, which can act as an excitatory neurotransmitter in some brain regions. Is highly active with L-Asp beta-methyl ester. Besides, has catalytic activity toward beta-aspartyl dipeptides and their methyl esters, including beta-L-Asp-L-Phe, beta-L-Asp-L-Phe methyl ester (aspartame), beta-L-Asp-L-Ala, beta-L-Asp-L-Leu and beta-L-Asp-L-Lys. Does not have aspartylglucosaminidase activity and is inactive toward GlcNAc-L-Asn. Likewise, has no activity toward glutamine. The polypeptide is Isoaspartyl peptidase/L-asparaginase (ASRGL1) (Macaca fascicularis (Crab-eating macaque)).